Consider the following 401-residue polypeptide: Glyceraldehyde-3-phosphate dehydrogenase A, chloroplastic (401 aa).

Residues 1 to 65 constitute a chloroplast transit peptide; the sequence is MASNMLSIAN…RSSQNGVVEA (65 aa). Residues 76-77, D100, and R145 contribute to the NADP(+) site; that span reads RI. D-glyceraldehyde 3-phosphate contacts are provided by residues 217–219, T248, R263, 276–277, and R299; these read SCT and TG. C218 serves as the catalytic Nucleophile. N381 lines the NADP(+) pocket.

The protein belongs to the glyceraldehyde-3-phosphate dehydrogenase family. Tetramer of either four A chains (GAPDH 2) or two A and two B chains (GAPDH 1).

Its subcellular location is the plastid. The protein resides in the chloroplast. It carries out the reaction D-glyceraldehyde 3-phosphate + phosphate + NADP(+) = (2R)-3-phospho-glyceroyl phosphate + NADPH + H(+). The protein operates within carbohydrate biosynthesis; Calvin cycle. This Spinacia oleracea (Spinach) protein is Glyceraldehyde-3-phosphate dehydrogenase A, chloroplastic (GAPA).